The primary structure comprises 241 residues: Beta-nerve growth factor (241 aa).

A signal peptide spans 1 to 18; the sequence is MSMLFYTLITAFLIGIQA. A propeptide spanning residues 19 to 121 is cleaved from the precursor; the sequence is EPHSESNVPA…PFNRTHRSKR (103 aa). N-linked (GlcNAc...) asparagine glycans are attached at residues N69 and N114. 3 disulfide bridges follow: C136-C201, C179-C229, and C189-C231. Residues Y173 and K209 each contribute to the a 1-acyl-sn-glycero-3-phospho-(1D-myo-inositol) site. K209 serves as a coordination point for a 1-acyl-sn-glycero-3-phospho-L-serine.

This sequence belongs to the NGF-beta family. As to quaternary structure, homodimer. The homodimer interacts with a single NTRK1 chain. The homodimer interacts with a single NGFR chain. The NGF dimer interacts with a single SORCS2 chain (via extracellular domain). The NGF precursor (proNGF) binds to a receptor complex formed by SORT1 and NGFR, which leads to NGF endocytosis. Both mature NGF and the immature NGF precursor (proNGF) interact with SORCS2 and with the heterodimer formed by SORCS2 and NGFR (via extracellular domains). The NGF precursor (proNGF) has much higher affinity for SORCS2 than mature NGF. The NGF precursor (proNGF) has much higher affinity for SORT1 than mature NGF. Interacts with ADAM10 in a divalent cation-dependent manner. Interaction with SORCS3.

It localises to the secreted. Its subcellular location is the endosome lumen. In terms of biological role, nerve growth factor is important for the development and maintenance of the sympathetic and sensory nervous systems. Extracellular ligand for the NTRK1 and NGFR receptors, activates cellular signaling cascades to regulate neuronal proliferation, differentiation and survival. The immature NGF precursor (proNGF) functions as a ligand for the heterodimeric receptor formed by SORCS2 and NGFR, and activates cellular signaling cascades that lead to inactivation of RAC1 and/or RAC2, reorganization of the actin cytoskeleton and neuronal growth cone collapse. In contrast to mature NGF, the precursor form (proNGF) promotes neuronal apoptosis (in vitro). Inhibits metalloproteinase-dependent proteolysis of platelet glycoprotein VI. Binds lysophosphatidylinositol and lysophosphatidylserine between the two chains of the homodimer. The lipid-bound form promotes histamine relase from mast cells, contrary to the lipid-free form. In Homo sapiens (Human), this protein is Beta-nerve growth factor (NGF).